We begin with the raw amino-acid sequence, 668 residues long: MMPSPSDSSRSLTSRPSTRGLTHLRLHRPWLQALLTLGLVQVLLGILVVTFSMVASSVTTTESIKRSCPSWAGFSLAFSGVVGIVSWKRPFTLVISFFSLLSVLCVMLSMAGSVLSCKNAQLARDFQQCSLEGKVCVCCPSVPLLRPCPESGQELKVAPNSTCDEARGALKNLLFSVCGLTICAAIICTLSAIVCCIQIFSLDLVHTLAPERSVSGPLGPLGCTSPPPAPLLHTMLDLEEFVPPVPPPPYYPPEYTCSSETDAQSITYNGSMDSPVPLYPTDCPPSYEAVMGLRGDSQATLFDPQLHDGSCICERVASIVDVSMDSGSLVLSAIGDLPGGSSPSEDSCLLELQGSVRSVDYVLFRSIQRSRAGYCLSLDCGLRGPFEESPLPRRPPRAARSYSCSAPEAPPPLGAPTAARSCHRLEGWPPWVGPCFPELRRRVPRGGGRPAAAPPTRAPTRRFSDSSGSLTPPGHRPPHPASPPPLLLPRSHSDPGITTSSDTADFRDLYTKVLEEEAASVSSADTGLCSEACLFRLARCPSPKLLRARSAEKRRPVPTFQKVPLPSGPAPAHSLGDLKGSWPGRGLVTRFLQISRKAPDPSGTGAHGHKQVPRSLWGRPGRESLHLRSCGDLSSSSSLRRLLSGRRLERGTRPHSLSLNGGSRETGL.

3 helical membrane-spanning segments follow: residues 34 to 54, 67 to 87, and 91 to 111; these read LLTLGLVQVLLGILVVTFSMV, SCPSWAGFSLAFSGVVGIVSW, and FTLVISFFSLLSVLCVMLSMA. N-linked (GlcNAc...) asparagine glycosylation is present at Asn160. Residues 174–194 form a helical membrane-spanning segment; that stretch reads LFSVCGLTICAAIICTLSAIV. Ser358 and Ser389 each carry phosphoserine. 3 disordered regions span residues 386-419, 442-503, and 550-570; these read FEESPLPRRPPRAARSYSCSAPEAPPPLGAPTAA, RVPR…SSDT, and SAEKRRPVPTFQKVPLPSGPA. Residues 398 to 407 are compositionally biased toward low complexity; sequence AARSYSCSAP. Ser493 carries the phosphoserine modification. Position 574 is a phosphoserine (Ser574). Disordered stretches follow at residues 597–620 and 645–668; these read KAPDPSGTGAHGHKQVPRSLWGRP and GRRLERGTRPHSLSLNGGSRETGL. Residues 655 to 668 show a composition bias toward polar residues; the sequence is HSLSLNGGSRETGL.

The protein belongs to the ENTREP family. In terms of assembly, may interact with WWOX. As to expression, widely expressed.

It localises to the membrane. The protein is Protein ENTREP3 of Homo sapiens (Human).